The chain runs to 292 residues: Glyoxylase B2 (292 aa).

Zn(2+) contacts are provided by His72, His74, Asp76, His77, His148, and Asp166. Residues 175 to 181, 208 to 210, and 284 to 287 contribute to the substrate site; these read TARCDFP, HDY, and KIPL. Position 208 (His208) interacts with Zn(2+).

It belongs to the metallo-beta-lactamase superfamily. Glyoxalase II family. The cofactor is Zn(2+).

The protein is Glyoxylase B2 (gloB2) of Dictyostelium discoideum (Social amoeba).